Here is a 90-residue protein sequence, read N- to C-terminus: Large ribosomal subunit protein eL31 (90 aa).

The protein belongs to the eukaryotic ribosomal protein eL31 family.

This Thermococcus gammatolerans (strain DSM 15229 / JCM 11827 / EJ3) protein is Large ribosomal subunit protein eL31.